The primary structure comprises 669 residues: Phosphatidylinositol-3-phosphate phosphatase MTMR1 (669 aa).

The residue at position 1 (M1) is an N-acetylmethionine. Residues M1 to E17 are compositionally biased toward low complexity. A disordered region spans residues M1–T55. Phosphoserine is present on residues S47 and S53. One can recognise a GRAM domain in the interval N94–G165. The Myotubularin phosphatase domain maps to G230–Y605. Residues N355, N380, and I381 each contribute to the a 1,2-diacyl-sn-glycero-3-phospho-(1D-myo-inositol-3-phosphate) site. C442 (phosphocysteine intermediate) is an active-site residue. Positions 443, 444, 445, 446, 447, 448, and 488 each coordinate a 1,2-diacyl-sn-glycero-3-phospho-(1D-myo-inositol-3-phosphate). Phosphate is bound at residue S443. Residues G445, W446, D447, and R448 each coordinate phosphate. Residues M612 to V669 are required for dimerization. Residues A644–V669 form a disordered region. Residues S649 to S661 show a composition bias toward low complexity.

The protein belongs to the protein-tyrosine phosphatase family. Non-receptor class myotubularin subfamily. In terms of assembly, homodimer. Widely expressed. Detected in skeletal muscle, heart, lung, liver and brain.

It is found in the cell membrane. Its subcellular location is the cytoplasm. It catalyses the reaction a 1,2-diacyl-sn-glycero-3-phospho-(1D-myo-inositol-3-phosphate) + H2O = a 1,2-diacyl-sn-glycero-3-phospho-(1D-myo-inositol) + phosphate. It carries out the reaction 1,2-dioctanoyl-sn-glycero-3-phospho-(1-D-myo-inositol-3-phosphate) + H2O = 1,2-dioctanoyl-sn-glycero-3-phospho-(1D-myo-inositol) + phosphate. The enzyme catalyses a 1,2-diacyl-sn-glycero-3-phospho-(1D-myo-inositol-3,5-bisphosphate) + H2O = a 1,2-diacyl-sn-glycero-3-phospho-(1D-myo-inositol-5-phosphate) + phosphate. Functionally, lipid phosphatase that specifically dephosphorylates the D-3 position of phosphatidylinositol 3-phosphate, generating phosphatidylinositol. Could also dephosphorylate phosphatidylinositol 3,5-bisphosphate to produce phosphatidylinositol 5-phosphate. The sequence is that of Phosphatidylinositol-3-phosphate phosphatase MTMR1 from Mus musculus (Mouse).